Reading from the N-terminus, the 152-residue chain is UPF0266 membrane protein YobD (152 aa).

3 helical membrane passes run 6–26 (LVLI…QFIM), 45–65 (VDSV…VTSH), and 67–87 (AQMT…IFWI).

It belongs to the UPF0266 family.

It localises to the cell inner membrane. This Salmonella dublin (strain CT_02021853) protein is UPF0266 membrane protein YobD.